We begin with the raw amino-acid sequence, 580 residues long: MSPSVSSPQLRHTKSNRAISRIDRTDPLALALQPPANEAPADKYARLHQEKLAKQRSDEIDKFLKQHQEDRATHGLASSPSTSVDGANFKKGRVYKMVLLGQAGAGKTTVLKQMRLLYDPPAHERERRGWTKIVLLNLTSSVRVLLETLSLYHDQRLERKSSELSRLESSTSASTSTSASASSPKHVDTESQPNDATRLELAKQLGTTKKINTSSLPWLTHIPSVVQLERALRTELGAFGEEAVLSASSDEAAITNQKVRTRLDAQGSSSIRGEKSPLVLRPGWQERLFTYARRSLSLTQNGRAAAARRETDGGDSQSESEKDNSETLKLLRAIRPEVLALWNDDAGCRALRKRGLFLDGQSDAATSYFLDNYSRITDAAYRPTDEDILHSRVRTLGVTEDVFRVDRSLIYRIYDVGGSRSQRAAWAPFLDDIESIIFLAPLSAFDQPLVEDCSTNRLADTFTLFNQIVTNPLLEHATMILFLNKIDLLEKKLRQGVQLHKYWPEYVGDNDFEAVWRWFRAKFRDALRRAEDEVNLDQTSRRRLYVHTTVATSTVQIRAILMSVKDSILRENLKLTGLVG.

Over residues 1–10 (MSPSVSSPQL) the composition is skewed to polar residues. A disordered region spans residues 1 to 28 (MSPSVSSPQLRHTKSNRAISRIDRTDPL). Residues 93–579 (RVYKMVLLGQ…RENLKLTGLV (487 aa)) enclose the G-alpha domain. The segment at 96-109 (KMVLLGQAGAGKTT) is G1 motif. 101–108 (GQAGAGKT) lines the GTP pocket. 2 disordered regions span residues 160 to 196 (KSSELSRLESSTSASTSTSASASSPKHVDTESQPNDA) and 302 to 325 (GRAAAARRETDGGDSQSESEKDNS). A compositionally biased stretch (low complexity) spans 167–183 (LESSTSASTSTSASASS). A G2 motif region spans residues 387–395 (DILHSRVRT). Residues 389-395 (LHSRVRT), 415-419 (DVGGS), 484-487 (NKID), and A551 each bind GTP. T395 provides a ligand contact to Mg(2+). The interval 411 to 420 (YRIYDVGGSR) is G3 motif. Residues 480–487 (ILFLNKID) are G4 motif. Positions 549 to 554 (TVATST) are G5 motif.

The protein belongs to the G-alpha family. G proteins are composed of 3 units; alpha, beta and gamma. The alpha chain contains the guanine nucleotide binding site.

Functionally, guanine nucleotide-binding proteins (G proteins) are involved as modulators or transducers in various transmembrane signaling systems. This Mycosarcoma maydis (Corn smut fungus) protein is Guanine nucleotide-binding protein alpha-4 subunit (GPA4).